The primary structure comprises 292 residues: MKHLIDKANTLMEALPYIRRFSGRTFVIKYGGHAMSDERLKESFALDVIMLKSLGINAVIVHGGGPQINETLKRYGIVSEFVRGMRVTDGETMSVVEMVLVGQVNKEVVGYLNQHGGKAVGLCGKDGSLLLSKKLLQEVTGEDGAIEQIDIGYVGDVVKVNTDLIKTLEQGGYLPVIAPVGVGLAGESYNINADVVAGRVAAALNAEKLILLTDTPGVLDKDKQLIQKISVAQMHRLIEDESITGGMIPKVVCCAEALNDGVKKAHIIDGRMEHSVLLEIFTDVGIGTEITK.

Substrate-binding positions include 64-65 (GG), Arg86, and Asn190.

The protein belongs to the acetylglutamate kinase family. ArgB subfamily.

The protein resides in the cytoplasm. It carries out the reaction N-acetyl-L-glutamate + ATP = N-acetyl-L-glutamyl 5-phosphate + ADP. Its pathway is amino-acid biosynthesis; L-arginine biosynthesis; N(2)-acetyl-L-ornithine from L-glutamate: step 2/4. In terms of biological role, catalyzes the ATP-dependent phosphorylation of N-acetyl-L-glutamate. In Trichlorobacter lovleyi (strain ATCC BAA-1151 / DSM 17278 / SZ) (Geobacter lovleyi), this protein is Acetylglutamate kinase.